We begin with the raw amino-acid sequence, 115 residues long: Replication initiation control protein YabA (115 aa).

4 residues coordinate Zn(2+): H90, C92, C106, and C109.

The protein belongs to the YabA family. In terms of assembly, homotetramer. Interacts with both DnaA and DnaN, acting as a bridge between these two proteins. It depends on Zn(2+) as a cofactor.

It is found in the cytoplasm. Its subcellular location is the nucleoid. Functionally, involved in control of chromosome replication initiation. Inhibits the cooperative binding of DnaA to the oriC region, thus negatively regulating initiation of chromosome replication. Inhibits the ability of DnaA-ATP to form a helix on DNA; does not disassemble preformed DnaA-DNA helices. Decreases the residence time of DnaA on the chromosome at its binding sites (oriC, replication forks and promoter-binding sites). Tethers DnaA to the replication machinery via the DNA polymerase beta sliding clamp subunit (dnaN). Associates with oriC and other DnaA targets on the chromosome in a DnaA-dependent manner. The polypeptide is Replication initiation control protein YabA (Staphylococcus epidermidis (strain ATCC 35984 / DSM 28319 / BCRC 17069 / CCUG 31568 / BM 3577 / RP62A)).